Reading from the N-terminus, the 312-residue chain is Zinc transporter ZitB (312 aa).

6 helical membrane passes run 16 to 36, 40 to 60, 81 to 101, 117 to 137, 153 to 173, and 177 to 197; these read LLIA…GGWL, LALL…FIAL, LTTL…ILIV, TPML…FWIL, LHVL…IVIL, and WTPI…RSAW.

Belongs to the cation diffusion facilitator (CDF) transporter (TC 2.A.4) family. SLC30A subfamily.

It is found in the cell inner membrane. Functionally, involved in zinc efflux across the cytoplasmic membrane, thus reducing zinc accumulation in the cytoplasm and rendering bacteria more resistant to zinc. It may contribute to zinc homeostasis at low concentrations of zinc. The chain is Zinc transporter ZitB from Yersinia pestis.